Consider the following 416-residue polypeptide: Transcription factor PIL1 (416 aa).

3 disordered regions span residues 1-24 (MEAK…NIKP), 89-113 (VSQS…KLKS), and 197-231 (ESTY…KRST). Low complexity predominate over residues 8–22 (SSSSEPNMISPSSNI). Residues 95 to 124 (QQDKETNEQMNNNKKKLKSSKIEFERNVSK) adopt a coiled-coil conformation. Residues 216–229 (VHARTRKPVTKRKR) are compositionally biased toward basic residues. Positions 229 to 278 (RSTEVHKLYERKRRDEFNKKMRALQDLLPNCYKDDKASLLDEAIKYMRTL) constitute a bHLH domain.

As to quaternary structure, homodimer. Interacts with APRR1/TOC1. Associates to PTAC12/HMR/PAP5 which acts as a transcriptional coactivator. Mainly expressed in stems, fruits and flowers and, to a lower extent, in leaves, seedlings and roots. Accumulates in etiolated seedlings.

The protein resides in the nucleus. Functionally, transcription factor. Involved in responses to transient and long-term shade. Required for the light-mediated inhibition of hypocotyl elongation. Necessary for rapid light-induced expression of the photomorphogenesis- and circadian-related gene APRR9. Seems to play a role in multiple PHYB responses, such as flowering transition and petiole elongation. The sequence is that of Transcription factor PIL1 from Arabidopsis thaliana (Mouse-ear cress).